Here is a 170-residue protein sequence, read N- to C-terminus: MPNAVGRFGRLSWLWLSLLVLVIDQASKFYFEGKLEMFQQIVVIPDLFSWTLAYNTGAAFSFLADSSGWQRWLFALIAIAVSAVLVVWLKRLGRNETWLAIALALVLGGALGNLYDRIALGHVIDFILVHWQNRWYFPAFNFADSAITVGAVMLALDMFKSKKTGEAVHD.

4 consecutive transmembrane segments (helical) span residues 11–31, 41–61, 69–89, and 95–115; these read LSWLWLSLLVLVIDQASKFYF, IVVIPDLFSWTLAYNTGAAFS, WQRWLFALIAIAVSAVLVVWL, and NETWLAIALALVLGGALGNLY. Catalysis depends on residues D125 and D144. Residues 136–156 form a helical membrane-spanning segment; sequence YFPAFNFADSAITVGAVMLAL.

It belongs to the peptidase A8 family.

The protein localises to the cell inner membrane. The catalysed reaction is Release of signal peptides from bacterial membrane prolipoproteins. Hydrolyzes -Xaa-Yaa-Zaa-|-(S,diacylglyceryl)Cys-, in which Xaa is hydrophobic (preferably Leu), and Yaa (Ala or Ser) and Zaa (Gly or Ala) have small, neutral side chains.. The protein operates within protein modification; lipoprotein biosynthesis (signal peptide cleavage). In terms of biological role, this protein specifically catalyzes the removal of signal peptides from prolipoproteins. The sequence is that of Lipoprotein signal peptidase from Pseudomonas fluorescens (strain Pf0-1).